A 161-amino-acid polypeptide reads, in one-letter code: C-type lectin lectoxin-Lio3 (161 aa).

The signal sequence occupies residues 1–23 (MRRFIFMSLGLLVLAFSLSGIGA). 3 disulfide bridges follow: C27-C38, C55-C154, and C129-C146. In terms of domain architecture, C-type lectin spans 34–155 (HNISCYKLFT…CGLLHYFICQ (122 aa)). A glycan (N-linked (GlcNAc...) asparagine) is linked at N35. Positions 117 to 119 (KGE) match the Mannose-binding motif. Ca(2+)-binding residues include E127, N142, and D143.

Belongs to the true venom lectin family. In terms of tissue distribution, expressed by the venom gland.

The protein resides in the secreted. Mannose-binding lectin which recognizes specific carbohydrate structures and agglutinates a variety of animal cells by binding to cell-surface glycoproteins and glycolipids. May be a calcium-dependent lectin. The chain is C-type lectin lectoxin-Lio3 from Erythrolamprus poecilogyrus (Water snake).